The primary structure comprises 182 residues: Ribosome-recycling factor (182 aa).

Positions 136–160 (VKKSEKDGDLSEDQSRDEQEKIQKE) are disordered.

Belongs to the RRF family.

The protein localises to the cytoplasm. Responsible for the release of ribosomes from messenger RNA at the termination of protein biosynthesis. May increase the efficiency of translation by recycling ribosomes from one round of translation to another. In Prochlorococcus marinus (strain NATL1A), this protein is Ribosome-recycling factor.